A 305-amino-acid polypeptide reads, in one-letter code: Tyrosine recombinase XerC (305 aa).

The region spanning 4 to 95 (TQIQELIIKW…AIKNFYKFLE (92 aa)) is the Core-binding (CB) domain. In terms of domain architecture, Tyr recombinase spans 116 to 298 (LLPKALSEEE…SIKHLETAYV (183 aa)). Catalysis depends on residues R159, K182, H250, R253, and H276. Catalysis depends on Y285, which acts as the O-(3'-phospho-DNA)-tyrosine intermediate.

This sequence belongs to the 'phage' integrase family. XerC subfamily. As to quaternary structure, forms a cyclic heterotetrameric complex composed of two molecules of XerC and two molecules of XerD.

It localises to the cytoplasm. In terms of biological role, site-specific tyrosine recombinase, which acts by catalyzing the cutting and rejoining of the recombining DNA molecules. The XerC-XerD complex is essential to convert dimers of the bacterial chromosome into monomers to permit their segregation at cell division. It also contributes to the segregational stability of plasmids. The chain is Tyrosine recombinase XerC from Rickettsia bellii (strain OSU 85-389).